The sequence spans 273 residues: Sanguinarine reductase (273 aa).

Residue Ser-153 is the Proton donor of the active site. Residues 157 to 161 (CDPDH) and Lys-175 contribute to the substrate site.

This sequence belongs to the NAD(P)-dependent epimerase/dehydratase family. As to quaternary structure, monomer.

The catalysed reaction is dihydrosanguinarine + NADP(+) = sanguinarine + NADPH. It catalyses the reaction dihydrosanguinarine + NAD(+) = sanguinarine + NADH. The enzyme catalyses dihydrochelirubine + NAD(+) = chelirubine + NADH. It carries out the reaction dihydrochelirubine + NADP(+) = chelirubine + NADPH. Inhibited by iodoacetamide and irreversibly by its product, dihydrosanguinarine. In terms of biological role, catalyzes the reduction of benzophenanthridines, preferentially sanguinarine, to the corresponding dihydroalkaloids. Involved in detoxifying the phytoalexins produced by plant itself. The sanguinarine produced by intact cells upon elicitation, after excretion and binding to cell wall elements, is rapidly reabsorbed and reduced to the less toxic dihydrosanguinarine. Can work with both NAD(P) or NAD as a hydrogen donor, but at low concentrations, the reaction velocity with NAD(P)H is threefold higher than with NADH. However, chelerythrine shows maximum conversion rates with NADH. The substrate preference is sanguinarine &gt; chelerythrine &gt; chelirubine, macarpine or 10-OH-chelerythrine. No activity with berberine or phenanthridine cations. This is Sanguinarine reductase from Eschscholzia californica (California poppy).